A 273-amino-acid chain; its full sequence is Elongation factor Ts (273 aa).

Residues 80–83 (TDFV) form an involved in Mg(2+) ion dislocation from EF-Tu region.

Belongs to the EF-Ts family.

Its subcellular location is the cytoplasm. Associates with the EF-Tu.GDP complex and induces the exchange of GDP to GTP. It remains bound to the aminoacyl-tRNA.EF-Tu.GTP complex up to the GTP hydrolysis stage on the ribosome. This chain is Elongation factor Ts, found in Tropheryma whipplei (strain Twist) (Whipple's bacillus).